We begin with the raw amino-acid sequence, 762 residues long: Putative cation exchanger YDL206W (762 aa).

Residues 1-26 (MHKPLRWLITIAFYVSNVILIGYSLS) form the signal peptide. Residues 27-30 (SNGS) lie on the Extracellular side of the membrane. N-linked (GlcNAc...) asparagine glycosylation occurs at N28. The helical transmembrane segment at 31–51 (ISEFYLHSVVLIECFSLLGVV) threads the bilayer. The Cytoplasmic portion of the chain corresponds to 52 to 102 (TSDCLTPSLSYISSNIFHISDRVSGMTLLALGNALPDITSTYQSMKSGVTS). The helical transmembrane segment at 103–123 (LAIGELFGGIFFLLTVVIGLM) threads the bilayer. Residues 124–156 (GCVATIQFQHDKSIETYTEESFDQNLSYDRSNY) lie on the Extracellular side of the membrane. An N-linked (GlcNAc...) asparagine glycan is attached at N148. A helical transmembrane segment spans residues 157–177 (ILDVGIFTFMLLVSGTFLADG). Residue R178 is a topological domain, cytoplasmic. The helical transmembrane segment at 179 to 199 (LYFWECIVMVLTYCCCAVYLI) threads the bilayer. The Extracellular portion of the chain corresponds to 200–501 (KSYKYPCEIN…YNYLTDVSLE (302 aa)). N-linked (GlcNAc...) asparagine glycans are attached at residues N280 and N329. Residues 502–522 (IGFFEFLSLLVTTPVSIILYL) form a helical membrane-spanning segment. Over 523–554 (SIPSEISQTDHDLPLSYLQNIQLIASPIILNQ) the chain is Cytoplasmic. A helical membrane pass occupies residues 555–575 (LITNNFSFWLLILSLVIAILL). Topologically, residues 576 to 589 (YFKTRTIPNKFNSD) are extracellular. Residues 590–610 (IIFTVAFLLSLACLSKAVHII) traverse the membrane as a helical segment. At 611 to 615 (VVTLT) the chain is on the cytoplasmic side. Residues 616 to 636 (HWINVFNISETILGLTIFTWG) form a helical membrane-spanning segment. The Extracellular portion of the chain corresponds to 637–650 (NSIGDLVSNITFVK). Residue N645 is glycosylated (N-linked (GlcNAc...) asparagine). The helical transmembrane segment at 651 to 671 (IGVLEIAIGACFGSPLLYFLF) threads the bilayer. The Cytoplasmic portion of the chain corresponds to 672-709 (GVGFDGIMIMLGDKTGKIVSGRDSNILMHHIDFKVDKN). Residues 710-730 (LINTGVGILIAFLIFTVLIPL) traverse the membrane as a helical segment. At 731-738 (NDWKIDKK) the chain is on the extracellular side. Residues 739 to 759 (ISIALLTLYIVVTCISVFLEV) form a helical membrane-spanning segment. The Cytoplasmic segment spans residues 760-762 (HQV).

The protein belongs to the Ca(2+):cation antiporter (CaCA) (TC 2.A.19) family.

It localises to the membrane. In terms of biological role, putative cation exchanger. The polypeptide is Putative cation exchanger YDL206W (Saccharomyces cerevisiae (strain ATCC 204508 / S288c) (Baker's yeast)).